The chain runs to 182 residues: Putative manganese efflux pump MntP (182 aa).

A run of 6 helical transmembrane segments spans residues 6–26, 37–57, 59–79, 104–126, 131–149, and 164–181; these read TVLVALALGCDAFAVGMGVGT, LSFHFGLFQMMMPIAGWFVGS, AADLVSTWGPWISFALLLFIG, SSLVMLSVATSMDALGVGFSFGI, LFLSAVWIGITAGIMTWGA, and METVGGLILVAIAVKLLL.

This sequence belongs to the MntP (TC 9.B.29) family.

It is found in the cell inner membrane. Functionally, probably functions as a manganese efflux pump. This chain is Putative manganese efflux pump MntP, found in Syntrophobacter fumaroxidans (strain DSM 10017 / MPOB).